Consider the following 150-residue polypeptide: UPF0178 protein Daro_2879 (150 aa).

The protein belongs to the UPF0178 family.

In Dechloromonas aromatica (strain RCB), this protein is UPF0178 protein Daro_2879.